A 174-amino-acid chain; its full sequence is NADH-quinone oxidoreductase subunit I (174 aa).

4Fe-4S ferredoxin-type domains lie at 61-91 (LTVK…ITAA) and 103-132 (ISYE…LGPE). [4Fe-4S] cluster contacts are provided by C71, C74, C77, C81, C112, C115, C118, and C122.

Belongs to the complex I 23 kDa subunit family. In terms of assembly, NDH-1 is composed of 14 different subunits. Subunits NuoA, H, J, K, L, M, N constitute the membrane sector of the complex. [4Fe-4S] cluster serves as cofactor.

Its subcellular location is the cell inner membrane. The catalysed reaction is a quinone + NADH + 5 H(+)(in) = a quinol + NAD(+) + 4 H(+)(out). Its function is as follows. NDH-1 shuttles electrons from NADH, via FMN and iron-sulfur (Fe-S) centers, to quinones in the respiratory chain. The immediate electron acceptor for the enzyme in this species is believed to be ubiquinone. Couples the redox reaction to proton translocation (for every two electrons transferred, four hydrogen ions are translocated across the cytoplasmic membrane), and thus conserves the redox energy in a proton gradient. The polypeptide is NADH-quinone oxidoreductase subunit I (Bdellovibrio bacteriovorus (strain ATCC 15356 / DSM 50701 / NCIMB 9529 / HD100)).